The primary structure comprises 411 residues: Glutamate dehydrogenase 2, mitochondrial (411 aa).

Residues 1-18 (MNALAATSRNFRQAARLL) constitute a mitochondrion transit peptide. Lys102 is an active-site residue.

It belongs to the Glu/Leu/Phe/Val dehydrogenases family. In terms of tissue distribution, expressed in roots. Expressed ubiquitously in various tissues.

The protein resides in the mitochondrion. The enzyme catalyses L-glutamate + NAD(+) + H2O = 2-oxoglutarate + NH4(+) + NADH + H(+). It catalyses the reaction L-glutamate + NADP(+) + H2O = 2-oxoglutarate + NH4(+) + NADPH + H(+). This Oryza sativa subsp. japonica (Rice) protein is Glutamate dehydrogenase 2, mitochondrial (GDH2).